The chain runs to 671 residues: DNA ligase (671 aa).

NAD(+) contacts are provided by residues 32–36 (DAEYD), 81–82 (SL), and glutamate 113. The N6-AMP-lysine intermediate role is filled by lysine 115. NAD(+) is bound by residues arginine 136, glutamate 173, lysine 290, and lysine 314. 4 residues coordinate Zn(2+): cysteine 408, cysteine 411, cysteine 426, and cysteine 432. The 79-residue stretch at 593 to 671 (EIDSPFAGKT…ETEMLRLLGS (79 aa)) folds into the BRCT domain.

The protein belongs to the NAD-dependent DNA ligase family. LigA subfamily. Mg(2+) serves as cofactor. The cofactor is Mn(2+).

The catalysed reaction is NAD(+) + (deoxyribonucleotide)n-3'-hydroxyl + 5'-phospho-(deoxyribonucleotide)m = (deoxyribonucleotide)n+m + AMP + beta-nicotinamide D-nucleotide.. Its function is as follows. DNA ligase that catalyzes the formation of phosphodiester linkages between 5'-phosphoryl and 3'-hydroxyl groups in double-stranded DNA using NAD as a coenzyme and as the energy source for the reaction. It is essential for DNA replication and repair of damaged DNA. In Escherichia coli O81 (strain ED1a), this protein is DNA ligase.